Here is a 290-residue protein sequence, read N- to C-terminus: BEL1-like homeodomain protein 11 (290 aa).

An SR/KY domain region spans residues 20-36 (SRYAKAVQCLVEEVIDI). The tract at residues 81–152 (ENHEIHIKIT…SLEEAIISQL (72 aa)) is BELL domain. The segment at residues 202–264 (AWKPIRGLPE…NARVRLWKPM (63 aa)) is a DNA-binding region (homeobox).

The protein belongs to the TALE/BELL homeobox family. In terms of assembly, may form heterodimeric complexes with TALE/KNOX proteins.

It localises to the nucleus. The chain is BEL1-like homeodomain protein 11 (BLH11) from Arabidopsis thaliana (Mouse-ear cress).